Reading from the N-terminus, the 243-residue chain is Interleukin-27 subunit alpha (243 aa).

An N-terminal signal peptide occupies residues 1-28 (MGQTAGDLGWRLSLLLLPLLLVQAGVWG).

Belongs to the IL-6 superfamily. Heterodimer with EBI3; not disulfide-linked. This heterodimer is known as interleukin IL-27. Post-translationally, O-glycosylated. As to expression, expressed in monocytes and in placenta.

The protein localises to the secreted. Its function is as follows. Associates with EBI3 to form the IL-27 interleukin, a heterodimeric cytokine which functions in innate immunity. IL-27 has pro- and anti-inflammatory properties, that can regulate T-helper cell development, suppress T-cell proliferation, stimulate cytotoxic T-cell activity, induce isotype switching in B-cells, and that has diverse effects on innate immune cells. Among its target cells are CD4 T-helper cells which can differentiate in type 1 effector cells (TH1), type 2 effector cells (TH2) and IL17 producing helper T-cells (TH17). It drives rapid clonal expansion of naive but not memory CD4 T-cells. It also strongly synergizes with IL-12 to trigger interferon-gamma/IFN-gamma production of naive CD4 T-cells, binds to the cytokine receptor WSX-1/TCCR which appears to be required but not sufficient for IL-27-mediated signal transduction. IL-27 potentiate the early phase of TH1 response and suppress TH2 and TH17 differentiation. It induces the differentiation of TH1 cells via two distinct pathways, p38 MAPK/TBX21- and ICAM1/ITGAL/ERK-dependent pathways. It also induces STAT1, STAT3, STAT4 and STAT5 phosphorylation and activates TBX21/T-Bet via STAT1 with resulting IL12RB2 up-regulation, an event crucial to TH1 cell commitment. It suppresses the expression of GATA3, the inhibitor TH1 cells development. In CD8 T-cells, it activates STATs as well as GZMB. IL-27 reveals to be a potent inhibitor of TH17 cell development and of IL-17 production. Indeed IL27 alone is also able to inhibit the production of IL17 by CD4 and CD8 T-cells. While IL-27 suppressed the development of pro-inflammatory Th17 cells via STAT1, it inhibits the development of anti-inflammatory inducible regulatory T-cells, iTreg, independently of STAT1. IL-27 also has an effect on cytokine production, it suppresses pro-inflammatory cytokine production such as IL2, IL4, IL5 and IL6 and activates suppressors of cytokine signaling such as SOCS1 and SOCS3. Apart from suppression of cytokine production, IL-27 also antagonizes the effects of some cytokines such as IL6 through direct effects on T-cells. Another important role of IL-27 is its antitumor activity as well as its antiangiogenic activity with activation of production of antiangiogenic chemokines such as IP-10/CXCL10 and MIG/CXCL9. In vein endothelial cells, it induces IRF1/interferon regulatory factor 1 and increase the expression of MHC class II transactivator/CIITA with resulting up-regulation of major histocompatibility complex class II. IL-27 also demonstrates antiviral activity with inhibitory properties on HIV-1 replication. The polypeptide is Interleukin-27 subunit alpha (IL27) (Homo sapiens (Human)).